Reading from the N-terminus, the 429-residue chain is UDP-N-acetylglucosamine 1-carboxyvinyltransferase (429 aa).

Lys22–Asn23 provides a ligand contact to phosphoenolpyruvate. Position 93 (Arg93) interacts with UDP-N-acetyl-alpha-D-glucosamine. The active-site Proton donor is Cys117. Position 117 is a 2-(S-cysteinyl)pyruvic acid O-phosphothioketal (Cys117). Residues Arg122–Leu126, Asp307, and Val329 each bind UDP-N-acetyl-alpha-D-glucosamine.

It belongs to the EPSP synthase family. MurA subfamily.

Its subcellular location is the cytoplasm. The catalysed reaction is phosphoenolpyruvate + UDP-N-acetyl-alpha-D-glucosamine = UDP-N-acetyl-3-O-(1-carboxyvinyl)-alpha-D-glucosamine + phosphate. Its pathway is cell wall biogenesis; peptidoglycan biosynthesis. Functionally, cell wall formation. Adds enolpyruvyl to UDP-N-acetylglucosamine. This is UDP-N-acetylglucosamine 1-carboxyvinyltransferase from Chloroherpeton thalassium (strain ATCC 35110 / GB-78).